Here is a 349-residue protein sequence, read N- to C-terminus: tRNA (guanine(26)-N(2))-dimethyltransferase (349 aa).

A Trm1 methyltransferase domain is found at 1-343 (MEVEEGRARV…ADRDVVVKIL (343 aa)). The S-adenosyl-L-methionine site is built by R25, R50, D66, D92, and A93.

The protein belongs to the class I-like SAM-binding methyltransferase superfamily. Trm1 family.

The enzyme catalyses guanosine(26) in tRNA + 2 S-adenosyl-L-methionine = N(2)-dimethylguanosine(26) in tRNA + 2 S-adenosyl-L-homocysteine + 2 H(+). Dimethylates a single guanine residue at position 26 of a number of tRNAs using S-adenosyl-L-methionine as donor of the methyl groups. This chain is tRNA (guanine(26)-N(2))-dimethyltransferase, found in Archaeoglobus fulgidus (strain ATCC 49558 / DSM 4304 / JCM 9628 / NBRC 100126 / VC-16).